Reading from the N-terminus, the 77-residue chain is DinI-like protein in retron Ec67 (77 aa).

It belongs to the DinI family.

The chain is DinI-like protein in retron Ec67 from Escherichia coli.